Consider the following 170-residue polypeptide: Tubulin polymerization-promoting protein family member 2 (170 aa).

The interval 127 to 147 (TGTHKERFDESGKGKGIAGRE) is disordered. Residues 129-139 (THKERFDESGK) show a composition bias toward basic and acidic residues.

The protein belongs to the TPPP family.

The protein localises to the cytoplasm. Its subcellular location is the cytosol. The protein resides in the cell projection. It localises to the cilium. It is found in the flagellum. Its function is as follows. Probable regulator of microtubule dynamics required for sperm motility. In contrast to other members of the family, has no microtubule bundling activity. In Macaca fascicularis (Crab-eating macaque), this protein is Tubulin polymerization-promoting protein family member 2 (TPPP2).